The chain runs to 252 residues: MNILLTNDDGIEAEGINTLAELLSKYHDVIMVAPENQRSASSHSITIYEPIIVKQVKKPYNIEAYSISGTPADCVRVALDKLVPDNIDMVISGINKGLNIGNDILYSGTVSAAIEGAMYKVPSMAVSAQFIKNKKENYKIAAKYALRMLNRLKKEDLKNDVVLNLNIPFCSEEEIKGIKVCKVGNKIFNTRFSEEIDEEGNKVLKLEGDINKDIYEGTDVYYIRNKYVTLTPLHYDLTNFNILEETEQLFLS.

A divalent metal cation is bound by residues Asp-8, Asp-9, Ser-39, and Asn-95.

This sequence belongs to the SurE nucleotidase family. Requires a divalent metal cation as cofactor.

It localises to the cytoplasm. It carries out the reaction a ribonucleoside 5'-phosphate + H2O = a ribonucleoside + phosphate. In terms of biological role, nucleotidase that shows phosphatase activity on nucleoside 5'-monophosphates. The sequence is that of 5'-nucleotidase SurE from Clostridium botulinum (strain ATCC 19397 / Type A).